Consider the following 315-residue polypeptide: Calcium homeostasis modulator protein 4 (315 aa).

The Cytoplasmic segment spans residues 1 to 14 (MSPDLNCISSSLLR). A helical membrane pass occupies residues 15-37 (SEPCINSLIAILTVCGQQLFSSY). Over 38–48 (TFSCPCQVGKN) the chain is Extracellular. 2 cysteine pairs are disulfide-bonded: Cys41/Cys132 and Cys43/Cys163. Residues 49 to 71 (FYYGSAFLVVPALILLIAGYALR) traverse the membrane as a helical segment. The Cytoplasmic segment spans residues 72–104 (GQMWTVASEYCCCSCTPPYRRSSPLERRLACLM). A helical membrane pass occupies residues 105–130 (FFDITGRALVAPLTWLTVTLLTGTYY). Over 131 to 184 (ECAASEFASVDQYPMFANVTPSKREEMLAGFPCYTSAPSDVIPIRDEVALLHRY) the chain is Extracellular. Residues 185–208 (QSQMLGWILVVLATIALLLSKCLA) traverse the membrane as a helical segment. Residues 209–315 (RCCSPLTSLQ…DRQEGIEMKP (107 aa)) lie on the Cytoplasmic side of the membrane.

Belongs to the CALHM family. Oligomerizes to form decameric and undecameric channels. Two hemichannels can assemble in a tail-to-tail manner to form a gap junction.

Its subcellular location is the cell membrane. Functionally, may assemble to form gap junction channel-like structures involved in intercellular communication. Channel gating and ion conductance are likely regulated by membrane lipids rather than by membrane depolarization or extracellular calcium levels. The chain is Calcium homeostasis modulator protein 4 from Mus musculus (Mouse).